A 465-amino-acid polypeptide reads, in one-letter code: Methionine aminopeptidase 2-1 (465 aa).

The interval 1–100 (MGSKTAENES…QSSPPRIPLA (100 aa)) is disordered. Residues 31-40 (RGAHWSRDGD) are compositionally biased toward basic and acidic residues. The span at 75-87 (SKKRKKRPKKKTS) shows a compositional bias: basic residues. His-216 provides a ligand contact to substrate. A divalent metal cation contacts are provided by Asp-237, Asp-248, and His-317. His-325 is a substrate binding site. 2 residues coordinate a divalent metal cation: Glu-350 and Glu-446.

It belongs to the peptidase M24A family. Methionine aminopeptidase eukaryotic type 2 subfamily. Co(2+) is required as a cofactor. Zn(2+) serves as cofactor. It depends on Mn(2+) as a cofactor. The cofactor is Fe(2+).

It is found in the cytoplasm. It carries out the reaction Release of N-terminal amino acids, preferentially methionine, from peptides and arylamides.. Cotranslationally removes the N-terminal methionine from nascent proteins. The N-terminal methionine is often cleaved when the second residue in the primary sequence is small and uncharged (Met-Ala-, Cys, Gly, Pro, Ser, Thr, or Val). This Penicillium rubens (strain ATCC 28089 / DSM 1075 / NRRL 1951 / Wisconsin 54-1255) (Penicillium chrysogenum) protein is Methionine aminopeptidase 2-1.